Here is a 342-residue protein sequence, read N- to C-terminus: (Lyso)-N-acylphosphatidylethanolamine lipase (342 aa).

In terms of domain architecture, AB hydrolase-1 spans 70–324 (PLVMVHGFGG…IEGASHHVYA (255 aa)).

Belongs to the peptidase S33 family. ABHD4/ABHD5 subfamily.

The catalysed reaction is N-hexadecanoyl-1,2-di-(9Z-octadecenoyl)-sn-glycero-3-phosphoethanolamine + H2O = N-hexadecanoyl-1-(9Z-octadecenoyl)-sn-glycero-3-phosphoethanolamine + (9Z)-octadecenoate + H(+). It catalyses the reaction an N-acyl-1,2-diacyl-sn-glycero-3-phosphoethanolamine + H2O = N,1-diacyl-sn-glycero-3-phosphoethanolamine + a fatty acid + H(+). It carries out the reaction N-hexadecanoyl-1-(9Z-octadecenoyl)-sn-glycero-3-phosphoethanolamine + H2O = N-hexadecanoyl-sn-glycero-3-phosphoethanolamine + (9Z)-octadecenoate + H(+). The enzyme catalyses N-octadecanoyl-1-(9Z-octadecenoyl)-sn-glycero-3-phosphoethanolamine + H2O = N-octadecanoyl-sn-glycero-3-phospho-ethanolamine + (9Z)-octadecenoate + H(+). The catalysed reaction is N-eicosanoyl-1-(9Z-octadecenoyl)-sn-glycero-3-phosphoethanolamine + H2O = N-eicosanoyl-sn-glycero-3-phosphoethanolamine + (9Z)-octadecenoate + H(+). It catalyses the reaction N,1-di-(9Z-octadecenoyl)-sn-glycero-3-phosphoethanolamine + H2O = N-(9Z-octadecenoyl)-sn-glycero-3-phosphoethanolamine + (9Z)-octadecenoate + H(+). It carries out the reaction N-(5Z,8Z,11Z,14Z-eicosatetraenoyl)-1-(9Z-octadecenoyl)-sn-glycero-3-phosphoethanolamine + H2O = N-(5Z,8Z,11Z,14Z-eicosatetraenoyl)-sn-glycero-3-phosphoethanolamine + (9Z)-octadecenoate + H(+). The enzyme catalyses 1-octadecanoyl-2-(9Z-octadecenoyl)-sn-glycero-3-phospho-(N-hexadecanoyl)-serine + H2O = 1-octadecanoyl-2-hydroxy-sn-glycero-3-phospho-(N-hexadecanoyl)-serine + (9Z)-octadecenoate + H(+). The catalysed reaction is 1-O-(1Z-octadecenoyl)-2-(9Z-octadecenoyl)-sn-glycero-3-phospho-N-hexadecanoyl-ethanolamine + H2O = 1-O-(1Z-octadecenyl)-sn-glycero-3-phospho-N-hexadecanoyl-ethanolamine + (9Z)-octadecenoate + H(+). It catalyses the reaction N,1-diacyl-sn-glycero-3-phosphoethanolamine + H2O = N-acyl-sn-glycero-3-phosphoethanolamine + a fatty acid + H(+). In terms of biological role, lysophospholipase selective for N-acyl phosphatidylethanolamine (NAPE). Contributes to the biosynthesis of N-acyl ethanolamines, including the endocannabinoid anandamide by hydrolyzing the sn-1 and sn-2 acyl chains from N-acyl phosphatidylethanolamine (NAPE) generating glycerophospho-N-acyl ethanolamine (GP-NAE), an intermediate for N-acyl ethanolamine biosynthesis. Hydrolyzes substrates bearing saturated, monounsaturated, polyunsaturated N-acyl chains. Shows no significant activity towards other lysophospholipids, including lysophosphatidylcholine, lysophosphatidylethanolamine and lysophosphatidylserine. In Bos taurus (Bovine), this protein is (Lyso)-N-acylphosphatidylethanolamine lipase.